The chain runs to 643 residues: tRNA 5-methylaminomethyl-2-thiouridine biosynthesis bifunctional protein MnmC (643 aa).

A tRNA (mnm(5)s(2)U34)-methyltransferase region spans residues 1–223 (MPDRLVSATL…VDDRLVGDYA (223 aa)). An FAD-dependent cmnm(5)s(2)U34 oxidoreductase region spans residues 247 to 643 (IGAGLAGCAV…LRARRVGSAG (397 aa)).

It in the N-terminal section; belongs to the methyltransferase superfamily. tRNA (mnm(5)s(2)U34)-methyltransferase family. In the C-terminal section; belongs to the DAO family. The cofactor is FAD.

Its subcellular location is the cytoplasm. It carries out the reaction 5-aminomethyl-2-thiouridine(34) in tRNA + S-adenosyl-L-methionine = 5-methylaminomethyl-2-thiouridine(34) in tRNA + S-adenosyl-L-homocysteine + H(+). Its function is as follows. Catalyzes the last two steps in the biosynthesis of 5-methylaminomethyl-2-thiouridine (mnm(5)s(2)U) at the wobble position (U34) in tRNA. Catalyzes the FAD-dependent demodification of cmnm(5)s(2)U34 to nm(5)s(2)U34, followed by the transfer of a methyl group from S-adenosyl-L-methionine to nm(5)s(2)U34, to form mnm(5)s(2)U34. In Burkholderia orbicola (strain MC0-3), this protein is tRNA 5-methylaminomethyl-2-thiouridine biosynthesis bifunctional protein MnmC.